The primary structure comprises 59 residues: UPF0434 protein plu1633 (59 aa).

This sequence belongs to the UPF0434 family.

The sequence is that of UPF0434 protein plu1633 from Photorhabdus laumondii subsp. laumondii (strain DSM 15139 / CIP 105565 / TT01) (Photorhabdus luminescens subsp. laumondii).